A 247-amino-acid polypeptide reads, in one-letter code: ATP synthase delta chain, chloroplastic (247 aa).

The N-terminal 60 residues, 1–60 (MAALRLASFTLRPAAAAAASASSGATPAAPRSASFARAARGLPSLRLAPPRRRGDLVRPR), are a transit peptide targeting the chloroplast.

It belongs to the ATPase delta chain family. As to quaternary structure, F-type ATPases have 2 components, CF(1) - the catalytic core - and CF(0) - the membrane proton channel. CF(1) has five subunits: alpha(3), beta(3), gamma(1), delta(1), epsilon(1). CF(0) has three main subunits: a, b and c.

It is found in the plastid. The protein resides in the chloroplast thylakoid membrane. This protein seems to be part of the stalk that links CF(0) to CF(1). It either transmits conformational changes from CF(0) into CF(1) or is implicated in proton conduction. In Sorghum bicolor (Sorghum), this protein is ATP synthase delta chain, chloroplastic (ATPD).